We begin with the raw amino-acid sequence, 580 residues long: Tyrosyl-DNA phosphodiesterase 1 (580 aa).

The interval Ala65–Ala117 is disordered. Over residues Ser87 to Ser110 the composition is skewed to low complexity. The active-site Nucleophile is the His248. Lys250 is a binding site for substrate. An interaction with DNA region spans residues Ser387–Ser390. The active-site Proton donor/acceptor is His479. Substrate is bound at residue Lys481.

It belongs to the tyrosyl-DNA phosphodiesterase family. As to expression, expressed in the body and at higher levels in the head. Expressed in the delaminating neuroblasts and a few ganglion mother cells in stage 11-14 embryonic central nervous system. Weak expression is seen in gonads at stage 16. Expressed in the brain; expression is regulated by DIP2.

The protein localises to the nucleus. It is found in the cytoplasm. Functionally, DNA repair enzyme that can remove a variety of covalent adducts from DNA through hydrolysis of a 3'-phosphodiester bond, giving rise to DNA with a free 3' phosphate. Catalyzes the hydrolysis of dead-end complexes between DNA and the topoisomerase I active site tyrosine residue. Hydrolyzes 3'-phosphoglycolates on protruding 3' ends on DNA double-strand breaks due to DNA damage by radiation and free radicals. Acts on blunt-ended double-strand DNA breaks and on single-stranded DNA. May have low 3'exonuclease activity and may be able to remove a single nucleoside from the 3'end of DNA and RNA molecules with 3'hydroxyl groups. Has no exonuclease activity towards DNA or RNA with a 3'phosphate. Required for normal polarization of epidermal cells, correct subcellular location of the Crb complex to the apical lateral membrane, and for normal neuronal development during embryonic development. Contributes to maintenance of epithelial cells in response to topoisomerase-1-mediated and oxidative DNA damage. Required for precise axonal bifurcation in mushroom body neurons. Required for maintenance of normal neuronal function. The sequence is that of Tyrosyl-DNA phosphodiesterase 1 from Drosophila melanogaster (Fruit fly).